The primary structure comprises 146 residues: 3-hydroxyacyl-[acyl-carrier-protein] dehydratase FabZ (146 aa).

Residue His47 is part of the active site.

The protein belongs to the thioester dehydratase family. FabZ subfamily.

The protein localises to the cytoplasm. The catalysed reaction is a (3R)-hydroxyacyl-[ACP] = a (2E)-enoyl-[ACP] + H2O. Its function is as follows. Involved in unsaturated fatty acids biosynthesis. Catalyzes the dehydration of short chain beta-hydroxyacyl-ACPs and long chain saturated and unsaturated beta-hydroxyacyl-ACPs. This Methylococcus capsulatus (strain ATCC 33009 / NCIMB 11132 / Bath) protein is 3-hydroxyacyl-[acyl-carrier-protein] dehydratase FabZ.